Consider the following 184-residue polypeptide: Adenine phosphoribosyltransferase (184 aa).

Belongs to the purine/pyrimidine phosphoribosyltransferase family. As to quaternary structure, homodimer.

The protein resides in the cytoplasm. It carries out the reaction AMP + diphosphate = 5-phospho-alpha-D-ribose 1-diphosphate + adenine. Its pathway is purine metabolism; AMP biosynthesis via salvage pathway; AMP from adenine: step 1/1. Catalyzes a salvage reaction resulting in the formation of AMP, that is energically less costly than de novo synthesis. The sequence is that of Adenine phosphoribosyltransferase from Blochmanniella pennsylvanica (strain BPEN).